Reading from the N-terminus, the 123-residue chain is Small ribosomal subunit protein uS12cz/uS12cy (123 aa).

This sequence belongs to the universal ribosomal protein uS12 family. In terms of assembly, part of the 30S ribosomal subunit.

The protein localises to the plastid. Its subcellular location is the chloroplast. Its function is as follows. With S4 and S5 plays an important role in translational accuracy. Located at the interface of the 30S and 50S subunits. The chain is Small ribosomal subunit protein uS12cz/uS12cy (rps12-A) from Angiopteris evecta (Mule's foot fern).